Consider the following 80-residue polypeptide: Conotoxin Pu11.1 (80 aa).

The first 19 residues, 1–19, serve as a signal peptide directing secretion; the sequence is MKLVLAIVLILMLLSLSTG. Residues 20–42 constitute a propeptide that is removed on maturation; that stretch reads AEMSDNHASRSATALTDRLLGPK. 4 disulfide bridges follow: Cys-46-Cys-60, Cys-53-Cys-65, Cys-59-Cys-72, and Cys-64-Cys-79.

Belongs to the conotoxin I3 superfamily. In terms of tissue distribution, expressed by the venom duct.

It is found in the secreted. The protein is Conotoxin Pu11.1 of Conus pulicarius (Flea-bitten cone).